Consider the following 212-residue polypeptide: Large ribosomal subunit protein uL3 (212 aa).

The segment at 133 to 156 (SMTHGSKNHRLPGSTGAGTTPGRV) is disordered.

Belongs to the universal ribosomal protein uL3 family. As to quaternary structure, part of the 50S ribosomal subunit. Forms a cluster with proteins L14 and L19.

In terms of biological role, one of the primary rRNA binding proteins, it binds directly near the 3'-end of the 23S rRNA, where it nucleates assembly of the 50S subunit. The sequence is that of Large ribosomal subunit protein uL3 from Crocosphaera subtropica (strain ATCC 51142 / BH68) (Cyanothece sp. (strain ATCC 51142)).